A 346-amino-acid chain; its full sequence is Cyclin-dependent kinase 20 (346 aa).

Residues 4–288 (YCILGRIGEG…ASQALLHQYF (285 aa)) form the Protein kinase domain. ATP-binding positions include 10 to 18 (IGEGAHGIV) and Lys-33. The Proton acceptor role is filled by Asp-127. The disordered stretch occupies residues 298-324 (SELPIPQRPGGPTPKAHPGPPHVHDFH). Positions 303-318 (PQRPGGPTPKAHPGPP) are enriched in pro residues.

The protein belongs to the protein kinase superfamily. CMGC Ser/Thr protein kinase family. CDC2/CDKX subfamily. As to quaternary structure, monomer. Interacts with TBC1D32 and MAK.

It localises to the nucleus. Its subcellular location is the cytoplasm. The protein localises to the cell projection. It is found in the cilium. It carries out the reaction L-seryl-[protein] + ATP = O-phospho-L-seryl-[protein] + ADP + H(+). The catalysed reaction is L-threonyl-[protein] + ATP = O-phospho-L-threonyl-[protein] + ADP + H(+). Its function is as follows. Required for high-level Shh responses in the developing neural tube. Together with TBC1D32, controls the structure of the primary cilium by coordinating assembly of the ciliary membrane and axoneme, allowing GLI2 to be properly activated in response to SHH signaling. Involved in cell growth. Activates CDK2, a kinase involved in the control of the cell cycle, by phosphorylating residue 'Thr-160'. This Rattus norvegicus (Rat) protein is Cyclin-dependent kinase 20 (Cdk20).